The sequence spans 437 residues: Homogentisate 1,2-dioxygenase (437 aa).

The segment at 15–34 is disordered; sequence NEHATSDPRVPDALPVGQNS. His-336, Glu-342, and His-372 together coordinate Fe cation.

This sequence belongs to the homogentisate dioxygenase family. It depends on Fe cation as a cofactor. Expressed in the hypodermis and intestine.

It carries out the reaction homogentisate + O2 = 4-maleylacetoacetate + H(+). It functions in the pathway amino-acid degradation; L-phenylalanine degradation; acetoacetate and fumarate from L-phenylalanine: step 4/6. Its function is as follows. Plays a role in the tyrosine degradation pathway. This Caenorhabditis elegans protein is Homogentisate 1,2-dioxygenase.